The sequence spans 86 residues: UPF0457 protein BCE33L2265 (86 aa).

It belongs to the UPF0457 family.

This Bacillus cereus (strain ZK / E33L) protein is UPF0457 protein BCE33L2265.